The following is a 509-amino-acid chain: tRNA-2-methylthio-N(6)-dimethylallyladenosine synthase (509 aa).

Polar residues predominate over residues 1 to 15; it reads MNEQQRLASQQANSS. The interval 1 to 25 is disordered; that stretch reads MNEQQRLASQQANSSTKKEEKDYSK. Positions 16–25 are enriched in basic and acidic residues; the sequence is TKKEEKDYSK. The MTTase N-terminal domain occupies 66–184; the sequence is RKFYIRTYGC…LPYILKDAMF (119 aa). The [4Fe-4S] cluster site is built by Cys-75, Cys-111, Cys-145, Cys-221, Cys-225, and Cys-228. One can recognise a Radical SAM core domain in the interval 207 to 437; that stretch reads RRGDIKAWVN…NTLVNTLAIE (231 aa). Positions 440-503 constitute a TRAM domain; the sequence is SRYKGQIVEV…TWSLNGELVE (64 aa).

Belongs to the methylthiotransferase family. MiaB subfamily. In terms of assembly, monomer. The cofactor is [4Fe-4S] cluster.

The protein localises to the cytoplasm. It carries out the reaction N(6)-dimethylallyladenosine(37) in tRNA + (sulfur carrier)-SH + AH2 + 2 S-adenosyl-L-methionine = 2-methylsulfanyl-N(6)-dimethylallyladenosine(37) in tRNA + (sulfur carrier)-H + 5'-deoxyadenosine + L-methionine + A + S-adenosyl-L-homocysteine + 2 H(+). Functionally, catalyzes the methylthiolation of N6-(dimethylallyl)adenosine (i(6)A), leading to the formation of 2-methylthio-N6-(dimethylallyl)adenosine (ms(2)i(6)A) at position 37 in tRNAs that read codons beginning with uridine. This Bacillus cereus (strain B4264) protein is tRNA-2-methylthio-N(6)-dimethylallyladenosine synthase.